A 90-amino-acid chain; its full sequence is UPF0335 protein R02793 (90 aa).

It belongs to the UPF0335 family.

The polypeptide is UPF0335 protein R02793 (Rhizobium meliloti (strain 1021) (Ensifer meliloti)).